The chain runs to 197 residues: Holliday junction branch migration complex subunit RuvA (197 aa).

A domain I region spans residues 1–64 (MIDSIVGTIQ…LSELECYGFL (64 aa)). The segment at 65–143 (TREERELFLK…KEFKVASTSG (79 aa)) is domain II. Positions 144–152 (TEEKTYEKL) are flexible linker. The segment at 152–197 (LEEISLALLSLGYEIDEINQVLSSEDFSELSLEDGIKLALKKLSKI) is domain III.

This sequence belongs to the RuvA family. Homotetramer. Forms an RuvA(8)-RuvB(12)-Holliday junction (HJ) complex. HJ DNA is sandwiched between 2 RuvA tetramers; dsDNA enters through RuvA and exits via RuvB. An RuvB hexamer assembles on each DNA strand where it exits the tetramer. Each RuvB hexamer is contacted by two RuvA subunits (via domain III) on 2 adjacent RuvB subunits; this complex drives branch migration. In the full resolvosome a probable DNA-RuvA(4)-RuvB(12)-RuvC(2) complex forms which resolves the HJ.

The protein localises to the cytoplasm. The RuvA-RuvB-RuvC complex processes Holliday junction (HJ) DNA during genetic recombination and DNA repair, while the RuvA-RuvB complex plays an important role in the rescue of blocked DNA replication forks via replication fork reversal (RFR). RuvA specifically binds to HJ cruciform DNA, conferring on it an open structure. The RuvB hexamer acts as an ATP-dependent pump, pulling dsDNA into and through the RuvAB complex. HJ branch migration allows RuvC to scan DNA until it finds its consensus sequence, where it cleaves and resolves the cruciform DNA. The chain is Holliday junction branch migration complex subunit RuvA from Caldicellulosiruptor saccharolyticus (strain ATCC 43494 / DSM 8903 / Tp8T 6331).